Here is a 236-residue protein sequence, read N- to C-terminus: Phosphoribosylaminoimidazole-succinocarboxamide synthase (236 aa).

The protein belongs to the SAICAR synthetase family.

It carries out the reaction 5-amino-1-(5-phospho-D-ribosyl)imidazole-4-carboxylate + L-aspartate + ATP = (2S)-2-[5-amino-1-(5-phospho-beta-D-ribosyl)imidazole-4-carboxamido]succinate + ADP + phosphate + 2 H(+). The protein operates within purine metabolism; IMP biosynthesis via de novo pathway; 5-amino-1-(5-phospho-D-ribosyl)imidazole-4-carboxamide from 5-amino-1-(5-phospho-D-ribosyl)imidazole-4-carboxylate: step 1/2. This Campylobacter jejuni subsp. jejuni serotype O:6 (strain 81116 / NCTC 11828) protein is Phosphoribosylaminoimidazole-succinocarboxamide synthase.